Consider the following 718-residue polypeptide: Phenylalanine--tRNA ligase beta subunit (718 aa).

The tRNA-binding domain occupies 39–153 (LNEISGIKFG…IFDLESNPLK (115 aa)). The B5 domain occupies 386–460 (SKKTFLDLNY…RFYGLEKLKD (75 aa)). Residues aspartate 438, aspartate 444, and aspartate 448 each contribute to the Mg(2+) site.

It belongs to the phenylalanyl-tRNA synthetase beta subunit family. Type 1 subfamily. In terms of assembly, tetramer of two alpha and two beta subunits. The cofactor is Mg(2+).

The protein localises to the cytoplasm. The enzyme catalyses tRNA(Phe) + L-phenylalanine + ATP = L-phenylalanyl-tRNA(Phe) + AMP + diphosphate + H(+). The polypeptide is Phenylalanine--tRNA ligase beta subunit (Mesomycoplasma hyopneumoniae (strain 7448) (Mycoplasma hyopneumoniae)).